The primary structure comprises 325 residues: Hydroxymethylglutaryl-CoA lyase, mitochondrial (325 aa).

Residues methionine 1–glycine 27 constitute a mitochondrion transit peptide. In terms of domain architecture, Pyruvate carboxyltransferase spans valine 33–leucine 300. Arginine 41 is a substrate binding site. Aspartate 42 is an a divalent metal cation binding site. Lysine 48 carries the N6-acetyllysine; alternate modification. Lysine 48 carries the N6-succinyllysine; alternate modification. Lysine 111 carries the N6-acetyllysine modification. Residues lysine 137 and lysine 179 each carry the N6-acetyllysine; alternate modification. An N6-succinyllysine; alternate mark is found at lysine 137 and lysine 179. Positions 233 and 235 each coordinate a divalent metal cation. Cysteine 266 is a catalytic residue. Asparagine 275 provides a ligand contact to a divalent metal cation. The Microbody targeting signal signature appears at cysteine 323–leucine 325. Lysine 324 carries the N6-acetyllysine modification.

The protein belongs to the HMG-CoA lyase family. Homodimer; disulfide-linked. Can also form homotetramers. A divalent metal cation is required as a cofactor. As to expression, highest expression in liver. Expressed in pancreas, kidney, intestine, testis, fibroblasts and lymphoblasts. Very low expression in brain and skeletal muscle. The relative expression of isoform 2 (at mRNA level) is highest in heart (30%), skeletal muscle (22%), and brain (14%).

The protein localises to the mitochondrion matrix. Its subcellular location is the peroxisome. It carries out the reaction (3S)-3-hydroxy-3-methylglutaryl-CoA = acetoacetate + acetyl-CoA. The protein operates within metabolic intermediate metabolism; (S)-3-hydroxy-3-methylglutaryl-CoA degradation; acetoacetate from (S)-3-hydroxy-3-methylglutaryl-CoA: step 1/1. Its activity is regulated as follows. Stimulated by reducing agents such as dithiothreitol (DTT). Its function is as follows. Mitochondrial 3-hydroxy-3-methylglutaryl-CoA lyase that catalyzes a cation-dependent cleavage of (S)-3-hydroxy-3-methylglutaryl-CoA into acetyl-CoA and acetoacetate, a key step in ketogenesis. Terminal step in leucine catabolism. Ketone bodies (beta-hydroxybutyrate, acetoacetate and acetone) are essential as an alternative source of energy to glucose, as lipid precursors and as regulators of metabolism. This Homo sapiens (Human) protein is Hydroxymethylglutaryl-CoA lyase, mitochondrial (HMGCL).